The following is a 123-amino-acid chain: PTS-dependent dihydroxyacetone kinase, phosphotransferase subunit DhaM (123 aa).

A PTS EIIA type-4 domain is found at 2–123 (TYGIVIVSHS…EQLEKMLIEK (122 aa)). His10 functions as the Tele-phosphohistidine intermediate; for EIIA activity in the catalytic mechanism.

In terms of assembly, homodimer. The dihydroxyacetone kinase complex is composed of a homodimer of DhaM, a homodimer of DhaK and the subunit DhaL.

The enzyme catalyses dihydroxyacetone + phosphoenolpyruvate = dihydroxyacetone phosphate + pyruvate. The protein operates within polyol metabolism; glycerol degradation. Its function is as follows. Component of the dihydroxyacetone kinase complex, which is responsible for the phosphoenolpyruvate (PEP)-dependent phosphorylation of dihydroxyacetone. DhaM serves as the phosphoryl donor. Is phosphorylated by phosphoenolpyruvate in an EI- and HPr-dependent reaction, and a phosphorelay system on histidine residues finally leads to phosphoryl transfer to DhaL and dihydroxyacetone. The protein is PTS-dependent dihydroxyacetone kinase, phosphotransferase subunit DhaM of Lactococcus lactis subsp. lactis (strain IL1403) (Streptococcus lactis).